Consider the following 991-residue polypeptide: Mediator of RNA polymerase II transcription subunit 5 (991 aa).

Belongs to the Mediator complex subunit 5 family. Component of the Mediator complex.

It localises to the nucleus. In terms of biological role, component of the Mediator complex, a coactivator involved in the regulated transcription of nearly all RNA polymerase II-dependent genes. Mediator functions as a bridge to convey information from gene-specific regulatory proteins to the basal RNA polymerase II transcription machinery. Mediator is recruited to promoters by direct interactions with regulatory proteins and serves as a scaffold for the assembly of a functional preinitiation complex with RNA polymerase II and the general transcription factors. This Yarrowia lipolytica (strain CLIB 122 / E 150) (Yeast) protein is Mediator of RNA polymerase II transcription subunit 5 (NUT1).